Reading from the N-terminus, the 303-residue chain is Small ribosomal subunit protein uS2 (303 aa).

Residues 267-303 (AESLSMAEEPAPPSQRKGPASETAEPVAEPAVTESGS) are disordered.

This sequence belongs to the universal ribosomal protein uS2 family.

In Solibacter usitatus (strain Ellin6076), this protein is Small ribosomal subunit protein uS2.